The following is a 207-amino-acid chain: Urease accessory protein UreG (207 aa).

Position 12–19 (12–19) interacts with GTP; sequence GPVGAGKT.

It belongs to the SIMIBI class G3E GTPase family. UreG subfamily. In terms of assembly, homodimer. UreD, UreF and UreG form a complex that acts as a GTP-hydrolysis-dependent molecular chaperone, activating the urease apoprotein by helping to assemble the nickel containing metallocenter of UreC. The UreE protein probably delivers the nickel.

The protein localises to the cytoplasm. Facilitates the functional incorporation of the urease nickel metallocenter. This process requires GTP hydrolysis, probably effectuated by UreG. The sequence is that of Urease accessory protein UreG from Cereibacter sphaeroides (strain ATCC 17023 / DSM 158 / JCM 6121 / CCUG 31486 / LMG 2827 / NBRC 12203 / NCIMB 8253 / ATH 2.4.1.) (Rhodobacter sphaeroides).